The sequence spans 292 residues: 2-(5''-triphosphoribosyl)-3'-dephosphocoenzyme-A synthase (292 aa).

The protein belongs to the CitG/MdcB family.

The catalysed reaction is 3'-dephospho-CoA + ATP = 2'-(5''-triphospho-alpha-D-ribosyl)-3'-dephospho-CoA + adenine. Catalyzes the formation of 2-(5''-triphosphoribosyl)-3'-dephosphocoenzyme-A, the precursor of the prosthetic group of the holo-acyl carrier protein (gamma chain) of citrate lyase, from ATP and dephospho-CoA. This chain is 2-(5''-triphosphoribosyl)-3'-dephosphocoenzyme-A synthase, found in Escherichia coli O7:K1 (strain IAI39 / ExPEC).